Here is a 492-residue protein sequence, read N- to C-terminus: Trehalose-phosphatase (492 aa).

The tract at residues 1-55 (MTETVTDQGKQRSSKLQKNEAAKDEQVEGKGKETLESGTDKSAEQNSSLLVGQPD) is disordered. Positions 17-43 (QKNEAAKDEQVEGKGKETLESGTDKSA) are enriched in basic and acidic residues. Positions 213 and 215 each coordinate Mg(2+). The Proton donor/acceptor role is filled by D215. 332 to 334 (QRK) is a substrate binding site. A Mg(2+)-binding site is contributed by D424.

The protein belongs to the gob-1 trehalose phosphatase family. Requires Mg(2+) as cofactor.

The enzyme catalyses alpha,alpha-trehalose 6-phosphate + H2O = alpha,alpha-trehalose + phosphate. Inhibited by trehalose 6-sulfate. Functionally, catalyzes the hydrolysis of trehalose 6-phosphate to trehalose and phosphate; prevents the accumulation of toxic levels of trehalose 6-phosphate. This is Trehalose-phosphatase from Brugia malayi (Filarial nematode worm).